The primary structure comprises 253 residues: Tetraspanin-3 (253 aa).

Topologically, residues methionine 1–threonine 11 are cytoplasmic. Residues valine 12–alanine 32 form a helical membrane-spanning segment. Residues tyrosine 33–threonine 50 are Extracellular-facing. The helical transmembrane segment at leucine 51–glycine 71 threads the bilayer. The Cytoplasmic segment spans residues cysteine 72–threonine 85. Residues phenylalanine 86–valine 106 traverse the membrane as a helical segment. Topologically, residues tyrosine 107–valine 212 are extracellular. 4 N-linked (GlcNAc...) asparagine glycosylation sites follow: asparagine 127, asparagine 152, asparagine 167, and asparagine 183. Residues isoleucine 213–valine 233 traverse the membrane as a helical segment. Over leucine 234–alanine 253 the chain is Cytoplasmic.

It belongs to the tetraspanin (TM4SF) family. As to quaternary structure, interacts with claudin-11/CLDN11 and integrins.

The protein resides in the membrane. Functionally, regulates the proliferation and migration of oligodendrocytes, a process essential for normal myelination and repair. In Homo sapiens (Human), this protein is Tetraspanin-3 (TSPAN3).